A 665-amino-acid polypeptide reads, in one-letter code: Succinate dehydrogenase [ubiquinone] flavoprotein subunit A, mitochondrial (665 aa).

The transit peptide at 1–45 (MALLKVAPSRLLSRALQLASRVQNCTPTVTTARRNFHFTVYGRKD) directs the protein to the mitochondrion. Residues A72, A75, T94, K95, and S101 each contribute to the FAD site. Tele-8alpha-FAD histidine is present on H102. FAD contacts are provided by T103, G108, A224, and D278. Oxaloacetate-binding residues include H299, R343, and H410. Catalysis depends on R343, which acts as the Proton acceptor. E443 contacts FAD. Residues R454 and A457 each contribute to the oxaloacetate site. Residues S459 and L460 each coordinate FAD.

Belongs to the FAD-dependent oxidoreductase 2 family. FRD/SDH subfamily. As to quaternary structure, component of complex II composed of four subunits: a flavoprotein (FP), an iron-sulfur protein (IP), and a cytochrome b composed of a large and a small subunit. FAD is required as a cofactor.

It localises to the mitochondrion inner membrane. It catalyses the reaction a ubiquinone + succinate = a ubiquinol + fumarate. It carries out the reaction (R)-malate + a quinone = enol-oxaloacetate + a quinol. The catalysed reaction is (S)-malate + a quinone = enol-oxaloacetate + a quinol. It functions in the pathway carbohydrate metabolism; tricarboxylic acid cycle; fumarate from succinate (eukaryal route): step 1/1. With respect to regulation, enol-oxaloacetate inhibits the succinate dehydrogenase activity. Flavoprotein (FP) subunit of succinate dehydrogenase (SDH) that is involved in complex II of the mitochondrial electron transport chain and is responsible for transferring electrons from succinate to ubiquinone (coenzyme Q). SDH also oxidizes malate to the non-canonical enol form of oxaloacetate, enol-oxaloacetate. Enol-oxaloacetate, which is a potent inhibitor of the succinate dehydrogenase activity, is further isomerized into keto-oxaloacetate. This Xenopus laevis (African clawed frog) protein is Succinate dehydrogenase [ubiquinone] flavoprotein subunit A, mitochondrial (sdha-a).